The primary structure comprises 414 residues: Membrane protein UL43 (414 aa).

The next 6 membrane-spanning stretches (helical) occupy residues 39-59 (GFAH…VVLS), 61-81 (GPYA…LGFL), 96-116 (AWLR…GEAG), 121-141 (VPGP…LLVL), 148-168 (LFLL…VGGL), and 184-204 (AAAL…GDSF). A disordered region spans residues 225–253 (PRYAPEDAERPTDHGPLLPSTHHQRSPRV). Residues 228–237 (APEDAERPTD) show a composition bias toward basic and acidic residues. A run of 2 helical transmembrane segments spans residues 339–359 (GLMF…AVWI) and 383–403 (ATLR…GVLV).

This sequence belongs to the alphaherpesvirinae HHV-1 UL43 family.

Its subcellular location is the membrane. This is Membrane protein UL43 from Homo sapiens (Human).